An 854-amino-acid polypeptide reads, in one-letter code: Putative COX1/OXI3 intron 2 protein (854 aa).

In terms of domain architecture, Reverse transcriptase spans 329-613 (LSKDINTNMF…EGVSFLGYDV (285 aa)).

The protein resides in the mitochondrion. The sequence is that of Putative COX1/OXI3 intron 2 protein (AI2) from Saccharomyces cerevisiae (strain ATCC 204508 / S288c) (Baker's yeast).